Reading from the N-terminus, the 112-residue chain is Small ribosomal subunit protein bS6 (112 aa).

Belongs to the bacterial ribosomal protein bS6 family.

Functionally, binds together with bS18 to 16S ribosomal RNA. The chain is Small ribosomal subunit protein bS6 from Legionella pneumophila (strain Paris).